The primary structure comprises 378 residues: Ribosomal RNA large subunit methyltransferase G (378 aa).

Belongs to the methyltransferase superfamily. RlmG family.

The protein localises to the cytoplasm. It carries out the reaction guanosine(1835) in 23S rRNA + S-adenosyl-L-methionine = N(2)-methylguanosine(1835) in 23S rRNA + S-adenosyl-L-homocysteine + H(+). In terms of biological role, specifically methylates the guanine in position 1835 (m2G1835) of 23S rRNA. This chain is Ribosomal RNA large subunit methyltransferase G, found in Escherichia coli O157:H7.